Here is a 349-residue protein sequence, read N- to C-terminus: Methylthioribose-1-phosphate isomerase (349 aa).

Substrate contacts are provided by residues 51–53 (RGA), arginine 94, and glutamine 199. Aspartate 240 serves as the catalytic Proton donor. 250 to 251 (NK) serves as a coordination point for substrate.

The protein belongs to the EIF-2B alpha/beta/delta subunits family. MtnA subfamily. In terms of assembly, homodimer.

It catalyses the reaction 5-(methylsulfanyl)-alpha-D-ribose 1-phosphate = 5-(methylsulfanyl)-D-ribulose 1-phosphate. It functions in the pathway amino-acid biosynthesis; L-methionine biosynthesis via salvage pathway; L-methionine from S-methyl-5-thio-alpha-D-ribose 1-phosphate: step 1/6. Its function is as follows. Catalyzes the interconversion of methylthioribose-1-phosphate (MTR-1-P) into methylthioribulose-1-phosphate (MTRu-1-P). The chain is Methylthioribose-1-phosphate isomerase from Bacillus mycoides (strain KBAB4) (Bacillus weihenstephanensis).